Reading from the N-terminus, the 451-residue chain is MSILPGIDSTPTTNELFEGTNEIHKLEIEKGYEWKVEVNAESKLVIEVKSGIAEIFGTELANDIEYSFYNNKFSILAVEDVSLEWRCPEIPEQKLMIGENKTAKYVYNLHFSLEKMRAASFDGPKVMIVGGSNTGKTALARTLCSYAIKYKSYQPMFINLNPEEGIFSVAGCLTATPISDILDVQSTIWGHSMTSGATMLHSKQPLVKTFGLEHIKENQDLYLATLKQLSEVVKLRLQNDVLVHRSGCIIDTPPISVMDDDLTELTTTFKEFNVNVVILLSDEQEDPLLTKLNDKLSTISSSFNLLRLPILSGVIERDDVFKRSLQRLAIREYFYGSPSVVLSPYTIGVDFEDITVWRPINFIENPEETSQLLPTQLLPVEVKPTTLQHALVAISYADRKANESNVQLAPTLGFGLITEVNDKRRKLRILLPVPGRLPDKAMILTAYRYLE.

ATP contacts are provided by residues Glu-33, Lys-72, and 133-138 (NTGKTA).

This sequence belongs to the Clp1 family. Clp1 subfamily. As to quaternary structure, component of a pre-mRNA cleavage factor complex. Interacts directly with PCF11.

It is found in the nucleus. Its function is as follows. Required for endonucleolytic cleavage during polyadenylation-dependent pre-mRNA 3'-end formation. The polypeptide is mRNA cleavage and polyadenylation factor CLP1 (Vanderwaltozyma polyspora (strain ATCC 22028 / DSM 70294 / BCRC 21397 / CBS 2163 / NBRC 10782 / NRRL Y-8283 / UCD 57-17) (Kluyveromyces polysporus)).